The following is a 140-amino-acid chain: Small ribosomal subunit protein uS12 (140 aa).

Residues 1–28 are disordered; it reads MPTINQLVRKSRKALEKKSTAPALQKGY. Aspartate 102 bears the 3-methylthioaspartic acid mark. A disordered region spans residues 119-140; the sequence is GVDKRRQSRSKYGAKRPKEAKK. The segment covering 124–140 has biased composition (basic residues); it reads RQSRSKYGAKRPKEAKK.

Belongs to the universal ribosomal protein uS12 family. In terms of assembly, part of the 30S ribosomal subunit. Contacts proteins S8 and S17. May interact with IF1 in the 30S initiation complex.

With S4 and S5 plays an important role in translational accuracy. Functionally, interacts with and stabilizes bases of the 16S rRNA that are involved in tRNA selection in the A site and with the mRNA backbone. Located at the interface of the 30S and 50S subunits, it traverses the body of the 30S subunit contacting proteins on the other side and probably holding the rRNA structure together. The combined cluster of proteins S8, S12 and S17 appears to hold together the shoulder and platform of the 30S subunit. The sequence is that of Small ribosomal subunit protein uS12 from Clostridioides difficile (strain 630) (Peptoclostridium difficile).